A 61-amino-acid polypeptide reads, in one-letter code: Potassium channel toxin alpha-KTx 18.1 (61 aa).

Positions 1-24 (MRFTGIILILISMTLIDSFFEMKV) are cleaved as a signal peptide. 3 disulfides stabilise this stretch: C33/C52, C38/C57, and C42/C59.

Expressed by the venom gland.

The protein localises to the secreted. Its function is as follows. Reversible blocker of both Kv1.3/KCNA3 potassium channels (high affinity) and Shaker B (mammalian Kv1.1 analog) potassium channels (very low affinity). This is Potassium channel toxin alpha-KTx 18.1 from Tityus obscurus (Amazonian scorpion).